The chain runs to 165 residues: MFLRQFSTSPALLKGKVLPELKNAQEISQFLRKSTWNVHDLIPSKEHITNEVDSRVVRKMLRLSGLDENLPEPELNRWAEMLNTHVAFINHVSDLHSSTKGEIGSSVFRLLASDHKPESPLTLKELLRQVDEISDHVSDQRGERGFDTSELRTRINRAKSTAEKE.

Basic and acidic residues predominate over residues 137–153; sequence VSDQRGERGFDTSELRT. Residues 137–165 are disordered; it reads VSDQRGERGFDTSELRTRINRAKSTAEKE.

The protein belongs to the GatF family. As to quaternary structure, subunit of the heterotrimeric GatFAB amidotransferase (AdT) complex, composed of A, B and F subunits.

Its subcellular location is the mitochondrion inner membrane. The catalysed reaction is L-glutamyl-tRNA(Gln) + L-glutamine + ATP + H2O = L-glutaminyl-tRNA(Gln) + L-glutamate + ADP + phosphate + H(+). Its function is as follows. Allows the formation of correctly charged Gln-tRNA(Gln) through the transamidation of misacylated Glu-tRNA(Gln) in the mitochondria. The reaction takes place in the presence of glutamine and ATP through an activated gamma-phospho-Glu-tRNA(Gln). Required for proper protein synthesis within the mitochondrion. The chain is Glutamyl-tRNA(Gln) amidotransferase subunit F, mitochondrial from Clavispora lusitaniae (strain ATCC 42720) (Yeast).